The sequence spans 414 residues: Serine/threonine transporter SstT (414 aa).

At 2-15 (TTQRSPGLFRRLAH) the chain is on the cytoplasmic side. Residues 16 to 36 (GSLVKQILVGLVLGILLAWIS) form a helical membrane-spanning segment. The Periplasmic portion of the chain corresponds to 37-45 (KPAAEAVGL). The chain crosses the membrane as a helical span at residues 46–66 (LGTLFVGALKAVAPILVLMLV). The Cytoplasmic segment spans residues 67 to 83 (MASIANHQHGQKTNIRP). Residues 84-104 (ILFLYLLGTFSAALAAVVFSF) traverse the membrane as a helical segment. Residues 105–142 (AFPSTLHLSSSAGDISPPSGIVEVMRGLVMSMVSNPID) are Periplasmic-facing. A helical transmembrane segment spans residues 143-163 (ALLKGNYIGILVWAIGLGFAL). Residues 164–179 (RHGNETTKNLVNDMSN) are Cytoplasmic-facing. Residues 180-200 (AVTFMVKLVIRFAPIGIFGLV) form a helical membrane-spanning segment. Topologically, residues 201-217 (SSTLATTGFSTLWGYAQ) are periplasmic. The chain crosses the membrane as a helical span at residues 218–238 (LLVVLVGCMLLVALVVNPLLV). Topologically, residues 239 to 299 (WWKIRRNPFP…VSIPLGATIN (61 aa)) are cytoplasmic. The chain crosses the membrane as a helical span at residues 300 to 320 (MAGAAITITVLTLAAVNTLGI). Topologically, residues 321–331 (PVDLPTALLLS) are periplasmic. Residues 332–352 (VVASLCACGASGVAGGSLLLI) traverse the membrane as a helical segment. Residues 353–414 (PLACNMFGIS…DRLANSALRN (62 aa)) are Cytoplasmic-facing.

The protein belongs to the dicarboxylate/amino acid:cation symporter (DAACS) (TC 2.A.23) family.

The protein localises to the cell inner membrane. It catalyses the reaction L-serine(in) + Na(+)(in) = L-serine(out) + Na(+)(out). The catalysed reaction is L-threonine(in) + Na(+)(in) = L-threonine(out) + Na(+)(out). In terms of biological role, involved in the import of serine and threonine into the cell, with the concomitant import of sodium (symport system). The sequence is that of Serine/threonine transporter SstT from Shigella flexneri serotype 5b (strain 8401).